The primary structure comprises 383 residues: Omega-6 fatty acid desaturase, endoplasmic reticulum isozyme 2 (383 aa).

The next 3 membrane-spanning stretches (helical) occupy residues 61–81, 85–105, and 117–137; these read TIAF…PGPL, GMAI…VIAH, and LLDD…YFSW. The short motif at 105-109 is the Histidine box-1 element; the sequence is HECGH. A Histidine box-2 motif is present at residues 141–145; that stretch reads HRRHH. 3 helical membrane passes run 179-199, 225-245, and 249-269; these read VLTL…LNVS, IYIS…LAMA, and AWVV…LVLI. The short motif at 315-319 is the Histidine box-3 element; that stretch reads HVAHH.

This sequence belongs to the fatty acid desaturase type 1 family.

The protein localises to the endoplasmic reticulum membrane. It participates in lipid metabolism; polyunsaturated fatty acid biosynthesis. Its function is as follows. ER (microsomal) omega-6 fatty acid desaturase introduces the second double bond in the biosynthesis of 18:3 fatty acids, important constituents of plant membranes. It is thought to use cytochrome b5 as an electron donor and to act on fatty acids esterified to phosphatidylcholine and, possibly, other phospholipids. This chain is Omega-6 fatty acid desaturase, endoplasmic reticulum isozyme 2 (FAD2-2), found in Glycine max (Soybean).